A 225-amino-acid polypeptide reads, in one-letter code: Cyclin-dependent kinase inhibitor 3 (225 aa).

Disordered regions lie at residues 47–94 and 130–169; these read AAAA…QRRR and ERKS…PLSP. Over residues 55-67 the composition is skewed to basic residues; the sequence is CRRRHRRGGRRGC. The segment covering 71–82 has biased composition (low complexity); that stretch reads GAGSARACGARS. Basic and acidic residues predominate over residues 143–153; it reads VAAEHAGEHKH.

This sequence belongs to the CDI family. ICK/KRP subfamily.

The protein is Cyclin-dependent kinase inhibitor 3 (KRP3) of Oryza sativa subsp. japonica (Rice).